Reading from the N-terminus, the 378-residue chain is Merozoite surface protein P41 (378 aa).

A signal peptide spans 1-20; it reads MKGVIFCLVVLLWRQAWVSS. Residues 21 to 133 enclose the 6-Cys 1 domain; the sequence is KSHKCDFTKE…LKINRFLKDD (113 aa). 3 disulfide bridges follow: Cys-25/Cys-42, Cys-56/Cys-113, and Cys-64/Cys-111. N-linked (GlcNAc...) asparagine glycosylation is found at Asn-77, Asn-149, Asn-182, and Asn-205. One can recognise a 6-Cys 2 domain in the interval 241-375; the sequence is VIKGCDFGNN…GESEVVLNSF (135 aa). 3 cysteine pairs are disulfide-bonded: Cys-245/Cys-270, Cys-284/Cys-348, and Cys-297/Cys-346. N-linked (GlcNAc...) asparagine glycosylation occurs at Asn-351.

As to quaternary structure, heterodimer; heterodimerizes with PF12. May form an antiparallel heterodimer with PF12. Post-translationally, processed into a soluble form.

The protein localises to the cell surface. The protein resides in the cell membrane. In Plasmodium falciparum (isolate 3D7), this protein is Merozoite surface protein P41 (PF41).